Here is a 507-residue protein sequence, read N- to C-terminus: Histidine ammonia-lyase (507 aa).

Residues 141-143 (ASG) constitute a cross-link (5-imidazolinone (Ala-Gly)). Serine 142 is modified (2,3-didehydroalanine (Ser)).

The protein belongs to the PAL/histidase family. In terms of processing, contains an active site 4-methylidene-imidazol-5-one (MIO), which is formed autocatalytically by cyclization and dehydration of residues Ala-Ser-Gly.

The protein resides in the cytoplasm. The catalysed reaction is L-histidine = trans-urocanate + NH4(+). It participates in amino-acid degradation; L-histidine degradation into L-glutamate; N-formimidoyl-L-glutamate from L-histidine: step 1/3. The protein is Histidine ammonia-lyase of Cereibacter sphaeroides (strain ATCC 17023 / DSM 158 / JCM 6121 / CCUG 31486 / LMG 2827 / NBRC 12203 / NCIMB 8253 / ATH 2.4.1.) (Rhodobacter sphaeroides).